A 154-amino-acid chain; its full sequence is 6,7-dimethyl-8-ribityllumazine synthase (154 aa).

Residues phenylalanine 22, 56–58 (AFE), and 80–82 (TVI) contribute to the 5-amino-6-(D-ribitylamino)uracil site. Residue 85–86 (ST) participates in (2S)-2-hydroxy-3-oxobutyl phosphate binding. The Proton donor role is filled by histidine 88. Position 113 (phenylalanine 113) interacts with 5-amino-6-(D-ribitylamino)uracil. Arginine 127 contributes to the (2S)-2-hydroxy-3-oxobutyl phosphate binding site.

Belongs to the DMRL synthase family.

The catalysed reaction is (2S)-2-hydroxy-3-oxobutyl phosphate + 5-amino-6-(D-ribitylamino)uracil = 6,7-dimethyl-8-(1-D-ribityl)lumazine + phosphate + 2 H2O + H(+). Its pathway is cofactor biosynthesis; riboflavin biosynthesis; riboflavin from 2-hydroxy-3-oxobutyl phosphate and 5-amino-6-(D-ribitylamino)uracil: step 1/2. Its function is as follows. Catalyzes the formation of 6,7-dimethyl-8-ribityllumazine by condensation of 5-amino-6-(D-ribitylamino)uracil with 3,4-dihydroxy-2-butanone 4-phosphate. This is the penultimate step in the biosynthesis of riboflavin. The sequence is that of 6,7-dimethyl-8-ribityllumazine synthase from Lactococcus lactis subsp. cremoris (strain MG1363).